A 208-amino-acid chain; its full sequence is Apoptosis inhibitor 193R (208 aa).

A disordered region spans residues 1-25 (MDTCGIYNSDNEEFSQENDGENDGG). Positions 10-23 (DNEEFSQENDGEND) are enriched in acidic residues. A BIR repeat occupies 37–108 (YDERLNSFQN…QDLKINCLFV (72 aa)). Zn(2+) contacts are provided by Cys-74, Cys-77, His-94, and Cys-105. 3 tandem repeats follow at residues 134 to 139 (NQDLDH), 140 to 145 (NQDLDH), and 146 to 151 (NQDLDQ). A 3 X 6 AA tandem repeats region spans residues 134 to 151 (NQDLDHNQDLDHNQDLDQ). The RING-type zinc finger occupies 163-197 (CKICFTNKITKVLIPCGHSSCYECVFKLQTCPICK).

It belongs to the IIV-6 193R family.

Functionally, plays a role early in infection by preventing host cell apoptosis. The sequence is that of Apoptosis inhibitor 193R from Invertebrate iridescent virus 6 (IIV-6).